We begin with the raw amino-acid sequence, 467 residues long: tRNA-2-methylthio-N(6)-dimethylallyladenosine synthase (467 aa).

In terms of domain architecture, MTTase N-terminal spans 4 to 124; sequence RKLFIKSYGC…LPEMVAKVER (121 aa). 6 residues coordinate [4Fe-4S] cluster: cysteine 13, cysteine 49, cysteine 87, cysteine 161, cysteine 165, and cysteine 168. The Radical SAM core domain maps to 147–379; that stretch reads QAHGPSAFLS…QARLVEIQQA (233 aa). Positions 382-444 constitute a TRAM domain; the sequence is QACVGRPMDV…SNSLAARLVE (63 aa).

Belongs to the methylthiotransferase family. MiaB subfamily. As to quaternary structure, monomer. The cofactor is [4Fe-4S] cluster.

Its subcellular location is the cytoplasm. The catalysed reaction is N(6)-dimethylallyladenosine(37) in tRNA + (sulfur carrier)-SH + AH2 + 2 S-adenosyl-L-methionine = 2-methylsulfanyl-N(6)-dimethylallyladenosine(37) in tRNA + (sulfur carrier)-H + 5'-deoxyadenosine + L-methionine + A + S-adenosyl-L-homocysteine + 2 H(+). In terms of biological role, catalyzes the methylthiolation of N6-(dimethylallyl)adenosine (i(6)A), leading to the formation of 2-methylthio-N6-(dimethylallyl)adenosine (ms(2)i(6)A) at position 37 in tRNAs that read codons beginning with uridine. This is tRNA-2-methylthio-N(6)-dimethylallyladenosine synthase from Rhodospirillum rubrum (strain ATCC 11170 / ATH 1.1.1 / DSM 467 / LMG 4362 / NCIMB 8255 / S1).